Reading from the N-terminus, the 178-residue chain is Phosphopantetheine adenylyltransferase (178 aa).

Substrate is bound at residue Ser-8. ATP is bound by residues 8–9 (SF) and His-16. Positions 40, 72, and 86 each coordinate substrate. Residues 87–89 (GLR), Glu-97, and 122–128 (YSFLSSS) contribute to the ATP site.

This sequence belongs to the bacterial CoaD family. Homohexamer. Mg(2+) is required as a cofactor.

The protein localises to the cytoplasm. The enzyme catalyses (R)-4'-phosphopantetheine + ATP + H(+) = 3'-dephospho-CoA + diphosphate. Its pathway is cofactor biosynthesis; coenzyme A biosynthesis; CoA from (R)-pantothenate: step 4/5. Functionally, reversibly transfers an adenylyl group from ATP to 4'-phosphopantetheine, yielding dephospho-CoA (dPCoA) and pyrophosphate. The chain is Phosphopantetheine adenylyltransferase from Picosynechococcus sp. (strain ATCC 27264 / PCC 7002 / PR-6) (Agmenellum quadruplicatum).